The primary structure comprises 451 residues: Phosphoglucosamine mutase (451 aa).

Ser104 acts as the Phosphoserine intermediate in catalysis. 4 residues coordinate Mg(2+): Ser104, Asp242, Asp244, and Asp246. Position 104 is a phosphoserine (Ser104).

The protein belongs to the phosphohexose mutase family. Mg(2+) is required as a cofactor. In terms of processing, activated by phosphorylation.

The catalysed reaction is alpha-D-glucosamine 1-phosphate = D-glucosamine 6-phosphate. Its function is as follows. Catalyzes the conversion of glucosamine-6-phosphate to glucosamine-1-phosphate. The polypeptide is Phosphoglucosamine mutase (Kocuria rhizophila (strain ATCC 9341 / DSM 348 / NBRC 103217 / DC2201)).